The chain runs to 218 residues: Peroxynitrite isomerase 2 (218 aa).

Positions 1–24 are disordered; it reads MTPAGDTPERGSGDRAVAEAAERA. Basic and acidic residues predominate over residues 7–24; that stretch reads TPERGSGDRAVAEAAERA. The GXWXGXG motif lies at 65–71; that stretch reads GVWRGEG. Heme b-binding residues include K181 and H208.

It belongs to the nitrobindin family. As to quaternary structure, homodimer. Requires heme b as cofactor.

The catalysed reaction is peroxynitrite = nitrate. The protein operates within nitrogen metabolism. Functionally, heme-binding protein able to scavenge peroxynitrite and to protect free L-tyrosine against peroxynitrite-mediated nitration, by acting as a peroxynitrite isomerase that converts peroxynitrite to nitrate. Therefore, this protein likely plays a role in peroxynitrite sensing and in the detoxification of reactive nitrogen and oxygen species (RNS and ROS, respectively). Is able to bind nitric oxide (NO) in vitro, but may act as a sensor of peroxynitrite levels in vivo. In Mycolicibacterium smegmatis (strain ATCC 700084 / mc(2)155) (Mycobacterium smegmatis), this protein is Peroxynitrite isomerase 2.